The following is a 434-amino-acid chain: Serine hydroxymethyltransferase (434 aa).

(6S)-5,6,7,8-tetrahydrofolate is bound by residues Leu124 and 128–130 (GHL). N6-(pyridoxal phosphate)lysine is present on Lys233. Glu249 is a binding site for (6S)-5,6,7,8-tetrahydrofolate.

Belongs to the SHMT family. In terms of assembly, homodimer. Requires pyridoxal 5'-phosphate as cofactor.

The protein resides in the cytoplasm. The enzyme catalyses (6R)-5,10-methylene-5,6,7,8-tetrahydrofolate + glycine + H2O = (6S)-5,6,7,8-tetrahydrofolate + L-serine. It participates in one-carbon metabolism; tetrahydrofolate interconversion. It functions in the pathway amino-acid biosynthesis; glycine biosynthesis; glycine from L-serine: step 1/1. Functionally, catalyzes the reversible interconversion of serine and glycine with tetrahydrofolate (THF) serving as the one-carbon carrier. This reaction serves as the major source of one-carbon groups required for the biosynthesis of purines, thymidylate, methionine, and other important biomolecules. Also exhibits THF-independent aldolase activity toward beta-hydroxyamino acids, producing glycine and aldehydes, via a retro-aldol mechanism. The protein is Serine hydroxymethyltransferase of Synechococcus sp. (strain JA-3-3Ab) (Cyanobacteria bacterium Yellowstone A-Prime).